The sequence spans 396 residues: S-adenosylmethionine synthase (396 aa).

Histidine 14 lines the ATP pocket. Aspartate 16 is a Mg(2+) binding site. Glutamate 42 is a K(+) binding site. Glutamate 55 and glutamine 98 together coordinate L-methionine. Residues 98–108 are flexible loop; it reads QSPDIAQGVHG. ATP is bound by residues 167–169, 234–235, aspartate 243, 249–250, serine 266, and lysine 270; these read DAK, RF, and RK. Aspartate 243 provides a ligand contact to L-methionine. L-methionine is bound at residue lysine 274.

This sequence belongs to the AdoMet synthase family. In terms of assembly, homotetramer; dimer of dimers. Mg(2+) serves as cofactor. K(+) is required as a cofactor.

It is found in the cytoplasm. The enzyme catalyses L-methionine + ATP + H2O = S-adenosyl-L-methionine + phosphate + diphosphate. It participates in amino-acid biosynthesis; S-adenosyl-L-methionine biosynthesis; S-adenosyl-L-methionine from L-methionine: step 1/1. Functionally, catalyzes the formation of S-adenosylmethionine (AdoMet) from methionine and ATP. The overall synthetic reaction is composed of two sequential steps, AdoMet formation and the subsequent tripolyphosphate hydrolysis which occurs prior to release of AdoMet from the enzyme. The chain is S-adenosylmethionine synthase from Treponema pallidum (strain Nichols).